Consider the following 274-residue polypeptide: tRNA-cytidine(32) 2-sulfurtransferase (274 aa).

The short motif at 40–45 (SGGKDS) is the PP-loop motif element. Cys115, Cys118, and Cys206 together coordinate [4Fe-4S] cluster.

It belongs to the TtcA family. In terms of assembly, homodimer. The cofactor is Mg(2+). It depends on [4Fe-4S] cluster as a cofactor.

Its subcellular location is the cytoplasm. The catalysed reaction is cytidine(32) in tRNA + S-sulfanyl-L-cysteinyl-[cysteine desulfurase] + AH2 + ATP = 2-thiocytidine(32) in tRNA + L-cysteinyl-[cysteine desulfurase] + A + AMP + diphosphate + H(+). The protein operates within tRNA modification. Catalyzes the ATP-dependent 2-thiolation of cytidine in position 32 of tRNA, to form 2-thiocytidine (s(2)C32). The sulfur atoms are provided by the cysteine/cysteine desulfurase (IscS) system. The protein is tRNA-cytidine(32) 2-sulfurtransferase of Ectopseudomonas mendocina (strain ymp) (Pseudomonas mendocina).